The primary structure comprises 408 residues: Digeranylgeranylglycerophospholipid reductase 1 (408 aa).

FAD-binding residues include Ala-15, Glu-34, Cys-45, Ala-46, Gly-48, Arg-99, Val-123, Asp-279, Gly-291, and Ile-292.

It belongs to the geranylgeranyl reductase family. DGGGPL reductase subfamily. It depends on FAD as a cofactor.

The enzyme catalyses a 2,3-bis-O-phytanyl-sn-glycerol 1-phospholipid + 8 oxidized 2[4Fe-4S]-[ferredoxin] = a 2,3-bis-O-(geranylgeranyl)-sn-glycerol 1-phospholipid + 8 reduced 2[4Fe-4S]-[ferredoxin] + 16 H(+). The catalysed reaction is 2,3-bis-O-(phytanyl)-sn-glycerol 1-phosphate + 8 oxidized 2[4Fe-4S]-[ferredoxin] = 2,3-bis-O-(geranylgeranyl)-sn-glycerol 1-phosphate + 8 reduced 2[4Fe-4S]-[ferredoxin] + 16 H(+). It carries out the reaction a 2,3-bis-O-phytanyl-sn-glycerol 1-phospholipid + 8 A = a 2,3-bis-O-(geranylgeranyl)-sn-glycerol 1-phospholipid + 8 AH2. It catalyses the reaction CDP-2,3-bis-O-(geranylgeranyl)-sn-glycerol + 8 AH2 = CDP-2,3-bis-O-(phytanyl)-sn-glycerol + 8 A. The enzyme catalyses archaetidylserine + 8 AH2 = 2,3-bis-O-phytanyl-sn-glycero-3-phospho-L-serine + 8 A. Its pathway is membrane lipid metabolism; glycerophospholipid metabolism. Functionally, is involved in the reduction of 2,3-digeranylgeranylglycerophospholipids (unsaturated archaeols) into 2,3-diphytanylglycerophospholipids (saturated archaeols) in the biosynthesis of archaeal membrane lipids. Catalyzes the formation of archaetidic acid (2,3-di-O-phytanyl-sn-glyceryl phosphate) from 2,3-di-O-geranylgeranylglyceryl phosphate (DGGGP) via the hydrogenation of each double bond of the isoprenoid chains. Is also probably able to reduce double bonds of geranyl groups in CDP-2,3-bis-O-(geranylgeranyl)-sn-glycerol and archaetidylserine, thus acting at various stages in the biosynthesis of archaeal membrane lipids. This is Digeranylgeranylglycerophospholipid reductase 1 from Methanococcoides burtonii (strain DSM 6242 / NBRC 107633 / OCM 468 / ACE-M).